A 184-amino-acid chain; its full sequence is ADP-ribosylation factor-like protein 2 (184 aa).

Gly-2 is lipidated: N-myristoyl glycine. GTP is bound by residues 23–30 (GLDNAGKT), 66–70 (DVGGQ), Gly-68, and 125–128 (NKSD).

It belongs to the small GTPase superfamily. Arf family. In the embryo, strongly expressed in migrating hypodermal cells. Shortly before the beginning of elongation, expressed in many developing neurons where it persists throughout adulthood. In the larva, highly expressed in migrating hypodermal cells and the uterus. Also expressed in vulva, spermatheca, sheath cells, distal tips cells and proctoderm of the male tail.

The protein resides in the cytoplasm. It is found in the cell membrane. It localises to the cytoskeleton. Its subcellular location is the microtubule organizing center. The protein localises to the centrosome. GTP-binding protein that functions in embryogenesis, cytokinesis, germline development and microtubulule cytoskeleton dynamics. This Caenorhabditis elegans protein is ADP-ribosylation factor-like protein 2 (evl-20).